Here is a 214-residue protein sequence, read N- to C-terminus: MALSYYSLLLLLLAVWAPALTLVMAGDPDILTDYVIPANGNPMNITGDFFTFTGFRKVFNTSSAPEPNSFTVTKATMAEFPALNGQSVSYATLVFPPSTVNPPHTHPRSAELLLVVDGALSVGFIDTTNKLYTQDLAAGDMFVFPKGMVHFQFNSGNQPAMALSAFGSAAPGVVPVPVTVFGTGIDDAVLAKSFKTDVPTILKLKANLTPPNKS.

An N-terminal signal peptide occupies residues 1-25 (MALSYYSLLLLLLAVWAPALTLVMA). N44 and N60 each carry an N-linked (GlcNAc...) asparagine glycan. The Cupin type-1 domain occupies 56-202 (RKVFNTSSAP…SFKTDVPTIL (147 aa)). Mn(2+) contacts are provided by H104, H106, E111, and H150.

The protein belongs to the germin family. As to quaternary structure, oligomer (believed to be a pentamer but probably hexamer).

Its subcellular location is the secreted. The protein localises to the extracellular space. It localises to the apoplast. In terms of biological role, may play a role in plant defense. Probably has no oxalate oxidase activity even if the active site is conserved. The sequence is that of Putative germin-like protein 9-2 from Oryza sativa subsp. japonica (Rice).